The sequence spans 96 residues: Aspartyl/glutamyl-tRNA(Asn/Gln) amidotransferase subunit C (96 aa).

This sequence belongs to the GatC family. In terms of assembly, heterotrimer of A, B and C subunits.

The catalysed reaction is L-glutamyl-tRNA(Gln) + L-glutamine + ATP + H2O = L-glutaminyl-tRNA(Gln) + L-glutamate + ADP + phosphate + H(+). The enzyme catalyses L-aspartyl-tRNA(Asn) + L-glutamine + ATP + H2O = L-asparaginyl-tRNA(Asn) + L-glutamate + ADP + phosphate + 2 H(+). Functionally, allows the formation of correctly charged Asn-tRNA(Asn) or Gln-tRNA(Gln) through the transamidation of misacylated Asp-tRNA(Asn) or Glu-tRNA(Gln) in organisms which lack either or both of asparaginyl-tRNA or glutaminyl-tRNA synthetases. The reaction takes place in the presence of glutamine and ATP through an activated phospho-Asp-tRNA(Asn) or phospho-Glu-tRNA(Gln). This Acaryochloris marina (strain MBIC 11017) protein is Aspartyl/glutamyl-tRNA(Asn/Gln) amidotransferase subunit C.